We begin with the raw amino-acid sequence, 340 residues long: Ferrochelatase (340 aa).

2 residues coordinate Fe cation: H189 and E292.

It belongs to the ferrochelatase family.

Its subcellular location is the cytoplasm. It catalyses the reaction heme b + 2 H(+) = protoporphyrin IX + Fe(2+). Its pathway is porphyrin-containing compound metabolism; protoheme biosynthesis; protoheme from protoporphyrin-IX: step 1/1. Functionally, catalyzes the ferrous insertion into protoporphyrin IX. The chain is Ferrochelatase from Pseudomonas fluorescens (strain ATCC BAA-477 / NRRL B-23932 / Pf-5).